Reading from the N-terminus, the 638-residue chain is RAF proto-oncogene serine/threonine-protein kinase (638 aa).

S43 is subject to Phosphoserine. Positions 56–130 constitute an RBD domain; the sequence is STMRVYLPNK…VGAELQVDFL (75 aa). The segment at 137–183 adopts a Phorbol-ester/DAG-type zinc-finger fold; sequence THNFVRKTFLKLAFCDICQKFLLNAFRCQTCGYKFHEHCSTKVPTMC. 8 residues coordinate Zn(2+): H138, C151, C154, C164, C167, H172, C175, and C183. Phosphoserine is present on S257. T266 is subject to Phosphothreonine; by autocatalysis. The disordered stretch occupies residues 279 to 323; that stretch reads LRSHSESGSPNNLSPTGWSNAKAPAPTHREKAASSTGQEKNKIRA. Polar residues predominate over residues 284-297; sequence ESGSPNNLSPTGWS. S329 is subject to Phosphoserine. One can recognise a Protein kinase domain in the interval 340–600; the sequence is VMLSSRIGSG…PQILSSIELL (261 aa). Residues 346–354 and K366 each bind ATP; that span reads IGSGSFGTV. Residue D459 is the Proton acceptor of the active site. A Phosphoserine modification is found at S490.

It belongs to the protein kinase superfamily. TKL Ser/Thr protein kinase family. RAF subfamily. The cofactor is Zn(2+). In terms of processing, phosphorylation at Ser-257 inactivates kinase activity. Dephosphorylation of Ser-257 by a complex containing protein phosphatase 1 relieves inactivation, leading to stimulate RAF1 activity.

The protein resides in the cytoplasm. Its subcellular location is the cell membrane. The catalysed reaction is L-seryl-[protein] + ATP = O-phospho-L-seryl-[protein] + ADP + H(+). It catalyses the reaction L-threonyl-[protein] + ATP = O-phospho-L-threonyl-[protein] + ADP + H(+). Functionally, serine/threonine-protein kinase that acts as a regulatory link between the membrane-associated Ras GTPases and the MAPK/ERK cascade, and this critical regulatory link functions as a switch determining cell fate decisions. RAF1 activation initiates a mitogen-activated protein kinase (MAPK) cascade that comprises a sequential phosphorylation of the dual-specific MAPK kinases (MAP2K1/MEK1 and MAP2K2/MEK2) and the extracellular signal-regulated kinases (MAPK3/ERK1 and MAPK1/ERK2). The protein is RAF proto-oncogene serine/threonine-protein kinase (raf1) of Xenopus laevis (African clawed frog).